An 886-amino-acid chain; its full sequence is Alanine--tRNA ligase (886 aa).

The Zn(2+) site is built by His-564, His-568, Cys-666, and His-670.

This sequence belongs to the class-II aminoacyl-tRNA synthetase family. The cofactor is Zn(2+).

The protein resides in the cytoplasm. The enzyme catalyses tRNA(Ala) + L-alanine + ATP = L-alanyl-tRNA(Ala) + AMP + diphosphate. Catalyzes the attachment of alanine to tRNA(Ala) in a two-step reaction: alanine is first activated by ATP to form Ala-AMP and then transferred to the acceptor end of tRNA(Ala). Also edits incorrectly charged Ser-tRNA(Ala) and Gly-tRNA(Ala) via its editing domain. The protein is Alanine--tRNA ligase of Prochlorococcus marinus subsp. pastoris (strain CCMP1986 / NIES-2087 / MED4).